A 185-amino-acid polypeptide reads, in one-letter code: Transcription factor bHLH109 (185 aa).

In terms of domain architecture, bHLH spans 67-117 (RSMEYRMMMEKKRRKEIKDKVDILQGLMPNHCTKPDLASKLENIIEYIKSL).

This sequence belongs to the bHLH protein family. In terms of assembly, homodimer.

The protein resides in the nucleus. Functionally, transcription factor involved in somatic embryogenesis. Acts as a positive regulator of somatic embryo formation. Acts as a positive regulator of ECP63 by targeting its promoter and inducing its expression. In Arabidopsis thaliana (Mouse-ear cress), this protein is Transcription factor bHLH109 (BHLH109).